Here is a 332-residue protein sequence, read N- to C-terminus: L-lactate dehydrogenase A chain (332 aa).

Lys-5 carries the post-translational modification N6-acetyllysine; alternate. Lys-5 is modified (N6-succinyllysine; alternate). At Lys-14 the chain carries N6-acetyllysine. Residue Thr-18 is modified to Phosphothreonine. 29 to 57 provides a ligand contact to NAD(+); the sequence is GAVGMACAISILMKDLADELALVDVIEDK. N6-acetyllysine; alternate is present on Lys-57. A Glycyl lysine isopeptide (Lys-Gly) (interchain with G-Cter in SUMO2); alternate cross-link involves residue Lys-57. N6-acetyllysine is present on Lys-81. Residue Arg-99 participates in NAD(+) binding. Arg-106 contributes to the substrate binding site. N6-acetyllysine; alternate is present on Lys-118. The residue at position 118 (Lys-118) is an N6-succinyllysine; alternate. An N6-acetyllysine modification is found at Lys-126. Asn-138 contacts NAD(+). Substrate-binding residues include Asn-138 and Arg-169. The Proton acceptor role is filled by His-193. An N6-acetyllysine modification is found at Lys-232. Position 239 is a phosphotyrosine (Tyr-239). Residue Lys-243 is modified to N6-acetyllysine. Thr-248 provides a ligand contact to substrate. 2 positions are modified to phosphothreonine: Thr-309 and Thr-322.

Belongs to the LDH/MDH superfamily. LDH family. In terms of assembly, homotetramer. Interacts with PTEN upstream reading frame protein MP31. ISGylated.

It localises to the cytoplasm. The enzyme catalyses (S)-lactate + NAD(+) = pyruvate + NADH + H(+). It participates in fermentation; pyruvate fermentation to lactate; (S)-lactate from pyruvate: step 1/1. Its function is as follows. Interconverts simultaneously and stereospecifically pyruvate and lactate with concomitant interconversion of NADH and NAD(+). The protein is L-lactate dehydrogenase A chain (LDHA) of Monodelphis domestica (Gray short-tailed opossum).